A 418-amino-acid polypeptide reads, in one-letter code: MLHPRARTMLLLSLPAVAIGIASSLILIMVMKIASVLQNLLWQRLPGTLGIAQDSPLWIIGVLTLTGIAVGLVIRFSQGHAGPDPACEPLIGAPIPPSALPGLIVALILGLAGGVSLGPEHPIITVNIALAVAIGARLLPRVNRMEWTILASAGTIGALFGTPVAAALIFSQTLNGSNEVPLWDRLFAPLMAAAAGALTTGLFFHPHFSLPIAHYGQMEMTDILSGAIVAAIAIAAGMVAVWCLPRLHAMMHQMKNPVFVLGIGGFILGILGVIGGPVSLFKGLDEMQQMVANQAFSTSDYFLLAVIKLAALVVAAASGFRGGRIFPAVFVGVALGLMLHEHVPAVPAAITVSCAILGIVLVVTRDGWLSLFMAAVVVPNTTLLPLLCIVMLPAWLLLAGKPMMMVNRQKQQPPHDNV.

Transmembrane regions (helical) follow at residues 9–31, 55–77, 90–112, 122–140, 147–169, 189–211, 223–244, 259–281, 301–323, 343–363, and 376–398; these read MLLL…IMVM, SPLW…IRFS, LIGA…LGLA, PIIT…RLLP, WTIL…AALI, PLMA…FSLP, ILSG…VWCL, FVLG…VSLF, YFLL…FRGG, VPAV…VLVV, and VVVP…WLLL.

Belongs to the chloride channel (TC 2.A.49) family.

Its subcellular location is the cell membrane. The chain is Putative ion-transport protein YfeO (yfeO) from Escherichia coli O6:H1 (strain CFT073 / ATCC 700928 / UPEC).